Here is a 103-residue protein sequence, read N- to C-terminus: Large ribosomal subunit protein uL24 (103 aa).

It belongs to the universal ribosomal protein uL24 family. Part of the 50S ribosomal subunit.

In terms of biological role, one of two assembly initiator proteins, it binds directly to the 5'-end of the 23S rRNA, where it nucleates assembly of the 50S subunit. One of the proteins that surrounds the polypeptide exit tunnel on the outside of the subunit. The sequence is that of Large ribosomal subunit protein uL24 from Ruegeria pomeroyi (strain ATCC 700808 / DSM 15171 / DSS-3) (Silicibacter pomeroyi).